The following is a 492-amino-acid chain: Glutamyl-tRNA(Gln) amidotransferase subunit A (492 aa).

Active-site charge relay system residues include K78 and S158. The Acyl-ester intermediate role is filled by S182.

Belongs to the amidase family. GatA subfamily. Heterotrimer of A, B and C subunits.

It carries out the reaction L-glutamyl-tRNA(Gln) + L-glutamine + ATP + H2O = L-glutaminyl-tRNA(Gln) + L-glutamate + ADP + phosphate + H(+). Functionally, allows the formation of correctly charged Gln-tRNA(Gln) through the transamidation of misacylated Glu-tRNA(Gln) in organisms which lack glutaminyl-tRNA synthetase. The reaction takes place in the presence of glutamine and ATP through an activated gamma-phospho-Glu-tRNA(Gln). This chain is Glutamyl-tRNA(Gln) amidotransferase subunit A, found in Rhodopseudomonas palustris (strain BisA53).